Reading from the N-terminus, the 111-residue chain is Putative pterin-4-alpha-carbinolamine dehydratase (111 aa).

Belongs to the pterin-4-alpha-carbinolamine dehydratase family.

The enzyme catalyses (4aS,6R)-4a-hydroxy-L-erythro-5,6,7,8-tetrahydrobiopterin = (6R)-L-erythro-6,7-dihydrobiopterin + H2O. The protein is Putative pterin-4-alpha-carbinolamine dehydratase of Marinobacter nauticus (strain ATCC 700491 / DSM 11845 / VT8) (Marinobacter aquaeolei).